Reading from the N-terminus, the 1009-residue chain is C2 domain-containing protein aex-1 (1009 aa).

One can recognise a C2 domain in the interval 812–945; sequence NAPHVDVHIS…ASEEKPTQRL (134 aa).

It belongs to the unc-13 family. In terms of tissue distribution, expressed in intestine, body wall muscles and some amphid neurons.

Involved in retrograde signaling from post-synaptic cells to pre-synaptic neurons, probably by regulating vesicle exocytosis in post-synaptic cells. Acts in muscles, to regulate the localization of synaptic vesicle fusion protein unc-13 likely during vesicle exocytosis and thus regulate retrograde signaling at the neuromuscular junction (NMJ). Regulates anterior body muscle contractions (aBOC) and the expulsion steps during the defecation motor program (DMP). Probably by regulating DMP, plays a homeostatic role in the uptake of triglycerides. Regulates locomotion. The protein is C2 domain-containing protein aex-1 of Caenorhabditis elegans.